The primary structure comprises 169 residues: uncharacterized protein (169 aa).

A helical membrane pass occupies residues 10 to 30 (YFVTILIIIIIILIVLLIVFL). Positions 98-123 (QSKPINKNNQQTKNTPTPLDDRPDLS) are disordered. Residues 100–115 (KPINKNNQQTKNTPTP) show a composition bias toward low complexity.

Its subcellular location is the membrane. This is an uncharacterized protein from Acanthamoeba polyphaga (Amoeba).